A 311-amino-acid chain; its full sequence is T-cell immunomodulatory protein (311 aa).

3 N-linked (GlcNAc...) asparagine glycosylation sites follow: N52, N70, and N181. A helical membrane pass occupies residues 266–286 (VLLTAIALIGVCVFILAIIGI).

This sequence belongs to the TIP family. Interacts with RUVBL1, RUVBL2 and alpha-tubulin.

The protein resides in the secreted. It is found in the cell membrane. In terms of biological role, modulator of T-cell function. Has a protective effect in graft versus host disease model. The chain is T-cell immunomodulatory protein from Macaca fascicularis (Crab-eating macaque).